The following is a 1907-amino-acid chain: Receptor-type tyrosine-protein phosphatase S (1907 aa).

The N-terminal stretch at 1 to 29 (MAPTWSPSVVSVVGPVGLFLVLLARGCLA) is a signal peptide. The Extracellular segment spans residues 30-1257 (EEPPRFIREP…PQPIVDGEEG (1228 aa)). 3 consecutive Ig-like C2-type domains span residues 33-123 (PRFI…AKLT), 135-224 (PNID…ANLY), and 232-314 (PRFS…AQIT). Cystine bridges form between C54-C107 and C156-C207. The tract at residues 68 to 72 (KKGKK) is important for binding to glycosaminoglycan chains. 2 N-linked (GlcNAc...) asparagine glycosylation sites follow: N250 and N295. C253 and C298 form a disulfide bridge. 8 Fibronectin type-III domains span residues 321 to 411 (APGT…TGEQ), 416 to 510 (APRN…TQQG), 514 to 603 (QPMN…TLQA), 608 to 705 (PPQD…TDED), 710 to 809 (PPRK…TKGA), 810 to 906 (VLGR…APRG), 907 to 1008 (FPQI…LARD), and 1011 to 1095 (SPKN…TAFN). Residues 691-700 (PGPESSPVVV) show a composition bias toward low complexity. The tract at residues 691-711 (PGPESSPVVVRTDEDVPSAPP) is disordered. N720 carries an N-linked (GlcNAc...) asparagine glycan. N916 carries N-linked (GlcNAc...) asparagine glycosylation. The chain crosses the membrane as a helical span at residues 1258–1278 (LIWVIGPVLAVVFIICIVIAI). Residues 1279 to 1907 (LLYKNKPDSK…YLGSFDHYAT (629 aa)) are Cytoplasmic-facing. Residues 1286–1296 (DSKRKDSEPRT) are compositionally biased toward basic and acidic residues. Residues 1286–1313 (DSKRKDSEPRTKCLLNNADLAPHHPKDP) form a disordered region. 2 Tyrosine-protein phosphatase domains span residues 1352 to 1607 (LSQE…LLEA) and 1639 to 1898 (MELE…ALEY). Substrate-binding positions include D1516, 1548 to 1554 (CSAGVGR), and Q1592. Catalysis depends on C1548, which acts as the Phosphocysteine intermediate. Residue C1839 is the Phosphocysteine intermediate of the active site.

This sequence belongs to the protein-tyrosine phosphatase family. Receptor class 2A subfamily. In terms of assembly, binding to large heparan sulfate proteoglycan structures promotes oligomerization. Binding to chondroitin sulfate proteoglycan does not lead to oligomerization. Interacts (via Ig-like domains) with NTRK3. Interacts (via Ig-like domains) with NTRK1, but does not form detectable complexes with NTRK2. Interacts with PPFIA1, PPFIA2 and PPFIA3. In terms of processing, a cleavage occurs, separating the extracellular domain from the transmembrane segment. This process called 'ectodomain shedding' is thought to be involved in receptor desensitization, signal transduction and/or membrane localization. In terms of tissue distribution, detected in brain cortex, cerebellum and thoracic spinal cord (at protein level). Detected in motor cortex and white matter of the spinal cord, but not in spinal cord gray matter. Isoform 1 and isoform 6 are predominantly expressed in the brain (cerebrum and cerebellum) and to a lesser extent in the heart and skeletal muscle. Also found in neuronal-derived cell lines. Detected in the ganglion cell layer of the retina and in glial cells along the optic nerve. Detected in bone marrow and spleen plasmacytoid dendritic cells.

It is found in the cell membrane. Its subcellular location is the cell projection. It localises to the axon. The protein resides in the perikaryon. The protein localises to the cytoplasmic vesicle. It is found in the secretory vesicle. Its subcellular location is the synaptic vesicle membrane. It localises to the synapse. The protein resides in the synaptosome. The protein localises to the postsynaptic density. It is found in the neuron projection. Its subcellular location is the growth cone. It catalyses the reaction O-phospho-L-tyrosyl-[protein] + H2O = L-tyrosyl-[protein] + phosphate. In terms of biological role, cell surface receptor that binds to glycosaminoglycans, including chondroitin sulfate proteoglycans and heparan sulfate proteoglycans. Binding to chondroitin sulfate and heparan sulfate proteoglycans has opposite effects on PTPRS oligomerization and regulation of neurite outgrowth. Contributes to the inhibition of neurite and axonal outgrowth by chondroitin sulfate proteoglycans, also after nerve transection. Plays a role in stimulating neurite outgrowth in response to the heparan sulfate proteoglycan GPC2. Required for normal brain development, especially for normal development of the pituitary gland and the olfactory bulb. Functions as a tyrosine phosphatase. Mediates dephosphorylation of NTRK1, NTRK2 and NTRK3. Plays a role in down-regulation of signaling cascades that lead to the activation of Akt and MAP kinases. Down-regulates TLR9-mediated activation of NF-kappa-B, as well as production of TNF, interferon alpha and interferon beta. The protein is Receptor-type tyrosine-protein phosphatase S (Ptprs) of Mus musculus (Mouse).